A 185-amino-acid chain; its full sequence is MINEIRKDADSRMEKSVEAFKNQISKIRTGRASPSILDGIMVEYYGASTPLRQLASVTVEDSRTLKINVFDRSISAAVEKAIMSSDLGLNPSSAGSDIRVPLPALTEERRKDLIKIVRNEAEQGRVAVRNVRRDANDKVKALLKDKEISEDEDRRSQDDVQKLTDAYIKLLDAALADKEKELMEF.

This sequence belongs to the RRF family.

The protein resides in the cytoplasm. Responsible for the release of ribosomes from messenger RNA at the termination of protein biosynthesis. May increase the efficiency of translation by recycling ribosomes from one round of translation to another. This chain is Ribosome-recycling factor, found in Serratia proteamaculans (strain 568).